The primary structure comprises 270 residues: Formamidopyrimidine-DNA glycosylase (270 aa).

P2 functions as the Schiff-base intermediate with DNA in the catalytic mechanism. E3 acts as the Proton donor in catalysis. Catalysis depends on K58, which acts as the Proton donor; for beta-elimination activity. Residues H91, R110, and R151 each coordinate DNA. The segment at 236 to 270 (RVYDREDAPCRRCATPIRRIVQAQRASFYCPTCQR) adopts an FPG-type zinc-finger fold. The active-site Proton donor; for delta-elimination activity is R260.

This sequence belongs to the FPG family. In terms of assembly, monomer. Zn(2+) is required as a cofactor.

The catalysed reaction is Hydrolysis of DNA containing ring-opened 7-methylguanine residues, releasing 2,6-diamino-4-hydroxy-5-(N-methyl)formamidopyrimidine.. It catalyses the reaction 2'-deoxyribonucleotide-(2'-deoxyribose 5'-phosphate)-2'-deoxyribonucleotide-DNA = a 3'-end 2'-deoxyribonucleotide-(2,3-dehydro-2,3-deoxyribose 5'-phosphate)-DNA + a 5'-end 5'-phospho-2'-deoxyribonucleoside-DNA + H(+). Involved in base excision repair of DNA damaged by oxidation or by mutagenic agents. Acts as a DNA glycosylase that recognizes and removes damaged bases. Has a preference for oxidized purines, such as 7,8-dihydro-8-oxoguanine (8-oxoG). Has AP (apurinic/apyrimidinic) lyase activity and introduces nicks in the DNA strand. Cleaves the DNA backbone by beta-delta elimination to generate a single-strand break at the site of the removed base with both 3'- and 5'-phosphates. This Thiobacillus denitrificans (strain ATCC 25259 / T1) protein is Formamidopyrimidine-DNA glycosylase.